Reading from the N-terminus, the 239-residue chain is Phosphoribosylaminoimidazole-succinocarboxamide synthase (239 aa).

It belongs to the SAICAR synthetase family.

It catalyses the reaction 5-amino-1-(5-phospho-D-ribosyl)imidazole-4-carboxylate + L-aspartate + ATP = (2S)-2-[5-amino-1-(5-phospho-beta-D-ribosyl)imidazole-4-carboxamido]succinate + ADP + phosphate + 2 H(+). Its pathway is purine metabolism; IMP biosynthesis via de novo pathway; 5-amino-1-(5-phospho-D-ribosyl)imidazole-4-carboxamide from 5-amino-1-(5-phospho-D-ribosyl)imidazole-4-carboxylate: step 1/2. This is Phosphoribosylaminoimidazole-succinocarboxamide synthase from Chlorobium luteolum (strain DSM 273 / BCRC 81028 / 2530) (Pelodictyon luteolum).